Consider the following 432-residue polypeptide: Adenylosuccinate lyase (432 aa).

Residues 4 to 5, 67 to 69, and 93 to 94 each bind N(6)-(1,2-dicarboxyethyl)-AMP; these read RY, RHD, and TS. Histidine 141 (proton donor/acceptor) is an active-site residue. Glutamine 212 is a N(6)-(1,2-dicarboxyethyl)-AMP binding site. The Proton donor/acceptor role is filled by serine 262. Residues serine 263, 268-270, asparagine 276, and 307-311 each bind N(6)-(1,2-dicarboxyethyl)-AMP; these read KRN and SAERI.

It belongs to the lyase 1 family. Adenylosuccinate lyase subfamily. As to quaternary structure, homodimer and homotetramer. Residues from neighboring subunits contribute catalytic and substrate-binding residues to each active site.

The catalysed reaction is N(6)-(1,2-dicarboxyethyl)-AMP = fumarate + AMP. It catalyses the reaction (2S)-2-[5-amino-1-(5-phospho-beta-D-ribosyl)imidazole-4-carboxamido]succinate = 5-amino-1-(5-phospho-beta-D-ribosyl)imidazole-4-carboxamide + fumarate. Its pathway is purine metabolism; AMP biosynthesis via de novo pathway; AMP from IMP: step 2/2. It functions in the pathway purine metabolism; IMP biosynthesis via de novo pathway; 5-amino-1-(5-phospho-D-ribosyl)imidazole-4-carboxamide from 5-amino-1-(5-phospho-D-ribosyl)imidazole-4-carboxylate: step 2/2. Catalyzes two reactions in de novo purine nucleotide biosynthesis. Catalyzes the breakdown of 5-aminoimidazole- (N-succinylocarboxamide) ribotide (SAICAR or 2-[5-amino-1-(5-phospho-beta-D-ribosyl)imidazole-4-carboxamido]succinate) to 5-aminoimidazole-4-carboxamide ribotide (AICAR or 5-amino-1-(5-phospho-beta-D-ribosyl)imidazole-4-carboxamide) and fumarate, and of adenylosuccinate (ADS or N(6)-(1,2-dicarboxyethyl)-AMP) to adenosine monophosphate (AMP) and fumarate. In Streptococcus mutans serotype c (strain ATCC 700610 / UA159), this protein is Adenylosuccinate lyase (purB).